An 85-amino-acid chain; its full sequence is UPF0291 protein SP_1473 (85 aa).

The interval Thr62–Ser85 is disordered.

The protein belongs to the UPF0291 family.

The protein resides in the cytoplasm. This chain is UPF0291 protein SP_1473, found in Streptococcus pneumoniae serotype 4 (strain ATCC BAA-334 / TIGR4).